A 351-amino-acid polypeptide reads, in one-letter code: Holliday junction branch migration complex subunit RuvB (351 aa).

Positions 4-185 (HDRELVSPEA…FGFVAHMDFY (182 aa)) are large ATPase domain (RuvB-L). ATP is bound by residues leucine 24, arginine 25, glycine 66, lysine 69, threonine 70, threonine 71, 132 to 134 (EDF), arginine 175, tyrosine 185, and arginine 222. Threonine 70 lines the Mg(2+) pocket. A small ATPAse domain (RuvB-S) region spans residues 186-256 (SPEELELILH…CARAALSLYE (71 aa)). Positions 259–351 (DEGLDRLDRA…AALFDPDEEP (93 aa)) are head domain (RuvB-H). The DNA site is built by arginine 314 and arginine 319.

The protein belongs to the RuvB family. Homohexamer. Forms an RuvA(8)-RuvB(12)-Holliday junction (HJ) complex. HJ DNA is sandwiched between 2 RuvA tetramers; dsDNA enters through RuvA and exits via RuvB. An RuvB hexamer assembles on each DNA strand where it exits the tetramer. Each RuvB hexamer is contacted by two RuvA subunits (via domain III) on 2 adjacent RuvB subunits; this complex drives branch migration. In the full resolvosome a probable DNA-RuvA(4)-RuvB(12)-RuvC(2) complex forms which resolves the HJ.

Its subcellular location is the cytoplasm. It catalyses the reaction ATP + H2O = ADP + phosphate + H(+). In terms of biological role, the RuvA-RuvB-RuvC complex processes Holliday junction (HJ) DNA during genetic recombination and DNA repair, while the RuvA-RuvB complex plays an important role in the rescue of blocked DNA replication forks via replication fork reversal (RFR). RuvA specifically binds to HJ cruciform DNA, conferring on it an open structure. The RuvB hexamer acts as an ATP-dependent pump, pulling dsDNA into and through the RuvAB complex. RuvB forms 2 homohexamers on either side of HJ DNA bound by 1 or 2 RuvA tetramers; 4 subunits per hexamer contact DNA at a time. Coordinated motions by a converter formed by DNA-disengaged RuvB subunits stimulates ATP hydrolysis and nucleotide exchange. Immobilization of the converter enables RuvB to convert the ATP-contained energy into a lever motion, pulling 2 nucleotides of DNA out of the RuvA tetramer per ATP hydrolyzed, thus driving DNA branch migration. The RuvB motors rotate together with the DNA substrate, which together with the progressing nucleotide cycle form the mechanistic basis for DNA recombination by continuous HJ branch migration. Branch migration allows RuvC to scan DNA until it finds its consensus sequence, where it cleaves and resolves cruciform DNA. This chain is Holliday junction branch migration complex subunit RuvB, found in Thermobifida fusca (strain YX).